The following is a 298-amino-acid chain: Small ribosomal subunit biogenesis GTPase RsgA 1 (298 aa).

One can recognise a CP-type G domain in the interval 63 to 224 (QTQLVRPPVA…VADTPGFSSY (162 aa)). GTP-binding positions include 112-115 (AKTD) and 167-175 (GQTGAGKST). Zn(2+) contacts are provided by Cys248, Cys253, His255, and Cys261.

This sequence belongs to the TRAFAC class YlqF/YawG GTPase family. RsgA subfamily. In terms of assembly, monomer. Associates with 30S ribosomal subunit, binds 16S rRNA. Zn(2+) is required as a cofactor.

Its subcellular location is the cytoplasm. Its function is as follows. One of several proteins that assist in the late maturation steps of the functional core of the 30S ribosomal subunit. Helps release RbfA from mature subunits. May play a role in the assembly of ribosomal proteins into the subunit. Circularly permuted GTPase that catalyzes slow GTP hydrolysis, GTPase activity is stimulated by the 30S ribosomal subunit. The sequence is that of Small ribosomal subunit biogenesis GTPase RsgA 1 from Lactiplantibacillus plantarum (strain ATCC BAA-793 / NCIMB 8826 / WCFS1) (Lactobacillus plantarum).